A 336-amino-acid chain; its full sequence is Fructokinase-2 (336 aa).

Belongs to the carbohydrate kinase PfkB family. In terms of tissue distribution, expressed in stem, sheaths, anthers, and panicles (at protein level).

The enzyme catalyses D-fructose + ATP = D-fructose 6-phosphate + ADP + H(+). Its pathway is glycan biosynthesis; starch biosynthesis. Strongly inhibited at high fructose concentration. May play an important role in maintaining the flux of carbon towards starch formation in endosperm. May also be involved in a sugar-sensing pathway. This chain is Fructokinase-2 (FRK2), found in Oryza sativa subsp. japonica (Rice).